A 406-amino-acid chain; its full sequence is Elongation factor Tu (406 aa).

The tr-type G domain occupies 10-215 (KPHVNVGTIG…AIDEYIPTPV (206 aa)). The G1 stretch occupies residues 19–26 (GHVDHGKT). 19-26 (GHVDHGKT) is a GTP binding site. Thr-26 lines the Mg(2+) pocket. Residues 61–65 (GITIN) are G2. Positions 82 to 85 (DCPG) are G3. GTP is bound by residues 82 to 86 (DCPGH) and 137 to 140 (NKVD). Residues 137–140 (NKVD) are G4. The interval 175 to 177 (SAL) is G5.

This sequence belongs to the TRAFAC class translation factor GTPase superfamily. Classic translation factor GTPase family. EF-Tu/EF-1A subfamily. Monomer.

It is found in the cytoplasm. The enzyme catalyses GTP + H2O = GDP + phosphate + H(+). Its function is as follows. GTP hydrolase that promotes the GTP-dependent binding of aminoacyl-tRNA to the A-site of ribosomes during protein biosynthesis. This chain is Elongation factor Tu, found in Thermus thermophilus (strain ATCC BAA-163 / DSM 7039 / HB27).